Here is a 194-residue protein sequence, read N- to C-terminus: uncharacterized protein (194 aa).

This is an uncharacterized protein from Rickettsia prowazekii (strain Madrid E).